The chain runs to 360 residues: Inward rectifier potassium channel 13 (360 aa).

The Cytoplasmic portion of the chain corresponds to 1 to 50; the sequence is MDGSHCKVIAPLLTERHQRMVTKDGHSTLQMDGAQTGLAYLRDAWGILMD. The chain crosses the membrane as a helical span at residues 51–77; it reads MRWRWMMLVFSASFVIHWLVFAVLWYI. Topologically, residues 78-105 are extracellular; sequence LAEMNGDLGLDHDAPPENHTICVKYITS. The segment at residues 106–122 is an intramembrane region (helical; Pore-forming); that stretch reads FTAAFSFSLETQLTIGY. Positions 119–124 match the Selectivity filter motif; that stretch reads TIGYGT. Topologically, residues 123–131 are extracellular; sequence GTMFPSGDC. Residues 132-157 traverse the membrane as a helical segment; that stretch reads PSAIALLAIQMLLGLMLEAFITGAFV. Over 158-360 the chain is Cytoplasmic; it reads AKIARPKNRA…FQISETGLTE (203 aa). Position 287 is a phosphoserine (Ser-287).

This sequence belongs to the inward rectifier-type potassium channel (TC 1.A.2.1) family. As to quaternary structure, homotetramer. Interacts with RAB28; the interaction may facilitate cone outer segments phagocytosis. Post-translationally, phosphorylation at Ser-287 by PKA increases them.

It localises to the membrane. The protein localises to the cell membrane. The catalysed reaction is K(+)(in) = K(+)(out). Its activity is regulated as follows. Inhibited by Ba(2+) and Cs(+), although sensitivity to those inhibitors is much lower than in other Kir channels. In terms of biological role, inward rectifier potassium channels are characterized by a greater tendency to allow potassium to flow into the cell rather than out of it. Their voltage dependence is regulated by the concentration of extracellular potassium; as external potassium is raised, the voltage range of the channel opening shifts to more positive voltages. The inward rectification is mainly due to the blockage of outward current by internal magnesium. KCNJ13 has a very low single channel conductance, low sensitivity to block by external barium and cesium, and no dependence of its inward rectification properties on the internal blocking particle magnesium. This is Inward rectifier potassium channel 13 (KCNJ13) from Bos taurus (Bovine).